Reading from the N-terminus, the 387-residue chain is UPF0400 protein C337.03 (387 aa).

One can recognise a CID domain in the interval M1–E133. Residues K177–S255 adopt a coiled-coil conformation. Residues T257 to S387 form a disordered region. Low complexity predominate over residues S283 to P297. Over residues Q298 to N323 the composition is skewed to polar residues. A compositionally biased stretch (acidic residues) spans N353 to D365. The span at D370–S379 shows a compositional bias: low complexity. S372 bears the Phosphoserine mark.

The protein belongs to the UPF0400 (RTT103) family.

In Schizosaccharomyces pombe (strain 972 / ATCC 24843) (Fission yeast), this protein is UPF0400 protein C337.03.